The primary structure comprises 291 residues: ATP synthase gamma chain (291 aa).

Belongs to the ATPase gamma chain family. In terms of assembly, F-type ATPases have 2 components, CF(1) - the catalytic core - and CF(0) - the membrane proton channel. CF(1) has five subunits: alpha(3), beta(3), gamma(1), delta(1), epsilon(1). CF(0) has three main subunits: a, b and c.

The protein resides in the cell inner membrane. Its function is as follows. Produces ATP from ADP in the presence of a proton gradient across the membrane. The gamma chain is believed to be important in regulating ATPase activity and the flow of protons through the CF(0) complex. The sequence is that of ATP synthase gamma chain from Burkholderia multivorans (strain ATCC 17616 / 249).